A 270-amino-acid chain; its full sequence is Undecaprenyl-diphosphatase 3 (270 aa).

The next 7 helical transmembrane spans lie at 5-25 (YYILKYLILGLFQGLTEPIPI), 42-62 (IEGFSFELLVNSASLLAVLLI), 89-109 (FFFIIYLVIATIPAGVIGVLF), 117-137 (LKGVKMVGISLLITAVGLWII), 192-212 (FSFLLYIPVSLGGLLLSITDI), 220-240 (TLFVPYIVAFIATFIMTYISL), and 250-270 (GNLKYFSFYCIIVGVLTLIFL).

This sequence belongs to the UppP family.

Its subcellular location is the cell membrane. It catalyses the reaction di-trans,octa-cis-undecaprenyl diphosphate + H2O = di-trans,octa-cis-undecaprenyl phosphate + phosphate + H(+). Catalyzes the dephosphorylation of undecaprenyl diphosphate (UPP). Confers resistance to bacitracin. This is Undecaprenyl-diphosphatase 3 from Bacillus anthracis.